The sequence spans 499 residues: Neuronal acetylcholine receptor subunit alpha-3 (499 aa).

Residues 1-25 (MGVVLPPPPLSMLMLVLMLLPVASA) form the signal peptide. Residues 26-244 (SEAEHRLFQY…PLFYTINLII (219 aa)) lie on the Extracellular side of the membrane. N-linked (GlcNAc...) asparagine glycans are attached at residues Asn49 and Asn166. Disulfide bonds link Cys153–Cys167 and Cys217–Cys218. Residues 245–260 (PCLLISFLTVLVFYLP) traverse the membrane as a helical segment. Over 261-262 (SD) the chain is Cytoplasmic. Residues 263–279 (CGEKVTLCISVLLSLTV) form a helical membrane-spanning segment. Na(+) is bound at residue Glu265. The Extracellular portion of the chain corresponds to 280–301 (FLLVITETIPSTSLVIPLIGEY). The helical transmembrane segment at 302 to 320 (LLFTMIFVTLSIVITVFVL) threads the bilayer. The Cytoplasmic segment spans residues 321–468 (NVHYRTPTTH…QDDWKYVAMV (148 aa)). Ser407 and Ser410 each carry phosphoserine. A helical membrane pass occupies residues 469–487 (IDRIFLWVFILVCILGTAG). The Extracellular segment spans residues 488 to 499 (LFLQPLMARDDT).

Belongs to the ligand-gated ion channel (TC 1.A.9) family. Acetylcholine receptor (TC 1.A.9.1) subfamily. Alpha-3/CHRNA3 sub-subfamily. Neuronal AChR is composed of two different types of subunits: alpha and beta. CHRNA3/Alpha-3 subunit can be combined to CHRNB2/beta-2 or CHRNB4/beta-4 to give rise to functional receptors. Part of a complex composed of STUB1/CHIP, VCP/p97, CHRNA3, and UBXN2A that modulates the ubiquitination and endoplasmic reticulum-associated degradation (ERAD) of CHRNA3. Within the complex UBXN2A acts as a scaffold protein required for the interaction of CHRNA3 with VCP/p97, this interaction also inhibits CHRNA3 ubiquitination by STUB1/CHIP and subsequently ERAD. Interacts with UBXN2A (via SEP domain), the interaction is required for the interaction of CHRNA3 in the STUB1:VCP:UBXN2A complex. Interacts with RIC3; which is required for proper folding and assembly. Interacts with LYPD6. Ubiquitinated; by STUB1/CHIP and thereafter degraded by the 26S proteosome complex. Expressed in the brain (at protein level).

The protein localises to the synaptic cell membrane. It is found in the cell membrane. The protein resides in the endoplasmic reticulum. Its subcellular location is the golgi apparatus. It catalyses the reaction K(+)(in) = K(+)(out). The catalysed reaction is Na(+)(in) = Na(+)(out). The enzyme catalyses Ca(2+)(in) = Ca(2+)(out). Activated by a myriad of ligands such as acetylcholine, cytisine, nicotine, choline and epibatidine. The heteropentamer CHRNA3:CHRNB2 activity is blocked by alpha-conotoxins ImI, ImII, PnIA, GID and MII. The heteropentamer CHRNA3:CHRNB4 activity is blocked by the alpha-conotoxin ImI. Functionally, component of neuronal acetylcholine receptors (nAChRs) that function as pentameric, ligand-gated cation channels with high calcium permeability among other activities. nAChRs are excitatory neurotrasnmitter receptors formed by a collection of nAChR subunits known to mediate synaptic transmission in the nervous system and the neuromuscular junction. Each nAchR subunit confers differential attributes to channel properties, including activation, deactivation and desensitization kinetics, pH sensitivity, cation permeability, and binding to allosteric modulators. CHRNA3 forms heteropentameric neuronal acetylcholine receptors with CHRNA5, CHRNB2 and CHRNB4. CHRNA3:CHRNB4 being predominant in neurons of the autonomic ganglia, it is known as ganglionic nicotinic receptor. CHRNA3:CHRNB4 or CHRNA3:CHRNA5:CHRNB4 play also an important role in the habenulo-interpeduncular tract, modulating the mesolimbic dopamine system and affecting reward circuits and addiction. Hypothalamic CHRNA3:CHRNB4 nAChR activation by nicotine leads to activation of POMC neurons and a decrease in food intake. Also expressed in the urothelium where it modulates reflex bladder activity by increasing intracellular calcium through extracellular influx and basal ATP release. This chain is Neuronal acetylcholine receptor subunit alpha-3 (Chrna3), found in Mus musculus (Mouse).